The following is a 386-amino-acid chain: Galactokinase (386 aa).

35–38 (EHTD) is a binding site for substrate. ATP-binding positions include Ser-69 and 125–131 (GAGLSSS). Positions 131 and 163 each coordinate Mg(2+). The Proton acceptor role is filled by Asp-175. Tyr-224 provides a ligand contact to substrate.

Belongs to the GHMP kinase family. GalK subfamily.

Its subcellular location is the cytoplasm. It carries out the reaction alpha-D-galactose + ATP = alpha-D-galactose 1-phosphate + ADP + H(+). Its pathway is carbohydrate metabolism; galactose metabolism. In terms of biological role, catalyzes the transfer of the gamma-phosphate of ATP to D-galactose to form alpha-D-galactose-1-phosphate (Gal-1-P). The protein is Galactokinase of Vibrio parahaemolyticus serotype O3:K6 (strain RIMD 2210633).